Reading from the N-terminus, the 917-residue chain is Isoleucine--tRNA ligase (917 aa).

Residues 57–67 carry the 'HIGH' region motif; that stretch reads PYANGNLHMGH. Glu554 is an L-isoleucyl-5'-AMP binding site. Positions 595–599 match the 'KMSKS' region motif; sequence KMSKS. Position 598 (Lys598) interacts with ATP. Positions 886, 889, 906, and 909 each coordinate Zn(2+).

Belongs to the class-I aminoacyl-tRNA synthetase family. IleS type 1 subfamily. In terms of assembly, monomer. Requires Zn(2+) as cofactor.

Its subcellular location is the cytoplasm. The enzyme catalyses tRNA(Ile) + L-isoleucine + ATP = L-isoleucyl-tRNA(Ile) + AMP + diphosphate. Functionally, catalyzes the attachment of isoleucine to tRNA(Ile). As IleRS can inadvertently accommodate and process structurally similar amino acids such as valine, to avoid such errors it has two additional distinct tRNA(Ile)-dependent editing activities. One activity is designated as 'pretransfer' editing and involves the hydrolysis of activated Val-AMP. The other activity is designated 'posttransfer' editing and involves deacylation of mischarged Val-tRNA(Ile). The polypeptide is Isoleucine--tRNA ligase (ileS) (Staphylococcus aureus (strain MSSA476)).